The sequence spans 258 residues: 1-(5-phosphoribosyl)-5-[(5-phosphoribosylamino)methylideneamino] imidazole-4-carboxamide isomerase (258 aa).

The active-site Proton acceptor is Asp9. Asp131 (proton donor) is an active-site residue.

Belongs to the HisA/HisF family.

Its subcellular location is the cytoplasm. The enzyme catalyses 1-(5-phospho-beta-D-ribosyl)-5-[(5-phospho-beta-D-ribosylamino)methylideneamino]imidazole-4-carboxamide = 5-[(5-phospho-1-deoxy-D-ribulos-1-ylimino)methylamino]-1-(5-phospho-beta-D-ribosyl)imidazole-4-carboxamide. Its pathway is amino-acid biosynthesis; L-histidine biosynthesis; L-histidine from 5-phospho-alpha-D-ribose 1-diphosphate: step 4/9. This is 1-(5-phosphoribosyl)-5-[(5-phosphoribosylamino)methylideneamino] imidazole-4-carboxamide isomerase from Salinibacter ruber (strain DSM 13855 / M31).